The primary structure comprises 226 residues: Eukaryotic translation initiation factor 3 subunit K (226 aa).

The 159-residue stretch at 42–200 (YNLDANLSLL…QLIVLPRNEF (159 aa)) folds into the PCI domain.

It belongs to the eIF-3 subunit K family. Component of the eukaryotic translation initiation factor 3 (eIF-3) complex.

The protein localises to the cytoplasm. Its function is as follows. Component of the eukaryotic translation initiation factor 3 (eIF-3) complex, which is involved in protein synthesis of a specialized repertoire of mRNAs and, together with other initiation factors, stimulates binding of mRNA and methionyl-tRNAi to the 40S ribosome. The eIF-3 complex specifically targets and initiates translation of a subset of mRNAs involved in cell proliferation. This is Eukaryotic translation initiation factor 3 subunit K (TIF3K1) from Oryza sativa subsp. japonica (Rice).